The chain runs to 284 residues: uncharacterized protein (284 aa).

The signal sequence occupies residues 1 to 24 (MLYSRESRTTVLFLALVTSLTVLC). The Cytoplasmic segment spans residues 25-84 (HSVDVTTVFTTSTITEITTVTAAPQPQNKAETALNTATNIIQTMQFLFNCAPFKWKGPLK). A helical transmembrane segment spans residues 85 to 104 (ITSCALNFIVLLLTAWGYLL). Topologically, residues 105–284 (KYLQENKLNS…SVHMYSSSLL (180 aa)) are extracellular. The N-linked (GlcNAc...) asparagine glycan is linked to N270.

The protein to yeast YNL033w.

It is found in the cell membrane. This is an uncharacterized protein from Saccharomyces cerevisiae (strain ATCC 204508 / S288c) (Baker's yeast).